We begin with the raw amino-acid sequence, 528 residues long: DNA damage-binding protein cmr1 (528 aa).

2 disordered regions span residues 32 to 98 (AQSS…QYEA) and 217 to 243 (DASQ…DPDP). Positions 52–62 (KPKKKPPPKKV) are enriched in basic residues. Residues 185 to 226 (LTPERIYTMTFHPSEAKPLIFAGDKMGNLGVLDASQEKPTSA) form a WD 1 repeat. Residues 230–242 (EDDEEDAEDDDPD) are compositionally biased toward acidic residues. WD repeat units lie at residues 250-290 (PHTR…SVEK), 297-337 (SDDI…RSAV), 342-382 (LSEK…HDDP), 389-428 (VSRL…AAWE), 451-494 (GRWV…LAQL), and 497-528 (DGIT…CLWM).

Belongs to the WD repeat DDB2/WDR76 family.

In terms of biological role, DNA-binding protein that binds to both single- and double-stranded DNA. Binds preferentially to UV-damaged DNA. May be involved in DNA-metabolic processes. The protein is DNA damage-binding protein cmr1 of Aspergillus fumigatus (strain CBS 144.89 / FGSC A1163 / CEA10) (Neosartorya fumigata).